Reading from the N-terminus, the 432-residue chain is Enolase (432 aa).

Gln163 lines the (2R)-2-phosphoglycerate pocket. The active-site Proton donor is the Glu205. Mg(2+) is bound by residues Asp242, Glu285, and Asp312. (2R)-2-phosphoglycerate contacts are provided by Lys337, Arg366, Ser367, and Lys388. Lys337 serves as the catalytic Proton acceptor.

It belongs to the enolase family. The cofactor is Mg(2+).

The protein localises to the cytoplasm. The protein resides in the secreted. It is found in the cell surface. It catalyses the reaction (2R)-2-phosphoglycerate = phosphoenolpyruvate + H2O. The protein operates within carbohydrate degradation; glycolysis; pyruvate from D-glyceraldehyde 3-phosphate: step 4/5. Its function is as follows. Catalyzes the reversible conversion of 2-phosphoglycerate (2-PG) into phosphoenolpyruvate (PEP). It is essential for the degradation of carbohydrates via glycolysis. In Bifidobacterium adolescentis (strain ATCC 15703 / DSM 20083 / NCTC 11814 / E194a), this protein is Enolase.